The following is a 186-amino-acid chain: Tegument protein UL55 (186 aa).

This sequence belongs to the alphaherpesvirinae HHV-1 UL55 family.

Its subcellular location is the virion tegument. It is found in the host nucleus matrix. This Homo sapiens (Human) protein is Tegument protein UL55.